A 377-amino-acid polypeptide reads, in one-letter code: Glutamate 5-kinase (377 aa).

Lysine 20 contributes to the ATP binding site. Substrate is bound by residues serine 60, aspartate 147, and asparagine 159. Residue 179–180 (TD) coordinates ATP. The PUA domain maps to 285–363 (AGRLVIDDGA…DKVYQVLGEA (79 aa)).

The protein belongs to the glutamate 5-kinase family.

It is found in the cytoplasm. The enzyme catalyses L-glutamate + ATP = L-glutamyl 5-phosphate + ADP. The protein operates within amino-acid biosynthesis; L-proline biosynthesis; L-glutamate 5-semialdehyde from L-glutamate: step 1/2. Its function is as follows. Catalyzes the transfer of a phosphate group to glutamate to form L-glutamate 5-phosphate. The chain is Glutamate 5-kinase from Acinetobacter baumannii (strain SDF).